The following is a 223-amino-acid chain: Protein DEHYDRATION-INDUCED 19 homolog 3 (223 aa).

Position 114 is a phosphothreonine (Thr-114). Ser-116 is modified (phosphoserine).

It belongs to the Di19 family. Post-translationally, phosphorylated in vitro by CPK3 or CPK11. As to expression, expressed in seedlings, roots, leaves, stems, flowers and siliques.

The protein resides in the nucleus. The polypeptide is Protein DEHYDRATION-INDUCED 19 homolog 3 (DI19-3) (Arabidopsis thaliana (Mouse-ear cress)).